Consider the following 653-residue polypeptide: Asparagine--tRNA ligase, cytoplasmic (653 aa).

The protein belongs to the class-II aminoacyl-tRNA synthetase family.

It is found in the cytoplasm. The catalysed reaction is tRNA(Asn) + L-asparagine + ATP = L-asparaginyl-tRNA(Asn) + AMP + diphosphate + H(+). This is Asparagine--tRNA ligase, cytoplasmic (asnS1) from Dictyostelium discoideum (Social amoeba).